Here is a 214-residue protein sequence, read N- to C-terminus: Adenylate kinase (214 aa).

An ATP-binding site is contributed by 10–15 (GAGKGT). The NMP stretch occupies residues 30-59 (STGDMFREAVASKSELGKKVEEILKRGDLV). AMP contacts are provided by residues threonine 31, arginine 36, 57–59 (DLV), 85–88 (GFPR), and glutamine 92. Residues 126-163 (NRRICSNCGKIYNLITLPPKVDGKCDVCGGTLYQREDD) are LID. Arginine 127 provides a ligand contact to ATP. 2 residues coordinate Zn(2+): cysteine 130 and cysteine 133. 136–137 (IY) is a binding site for ATP. Zn(2+)-binding residues include cysteine 150 and cysteine 153. AMP-binding residues include arginine 160 and arginine 171. Leucine 199 contributes to the ATP binding site.

It belongs to the adenylate kinase family. As to quaternary structure, monomer.

Its subcellular location is the cytoplasm. It catalyses the reaction AMP + ATP = 2 ADP. Its pathway is purine metabolism; AMP biosynthesis via salvage pathway; AMP from ADP: step 1/1. In terms of biological role, catalyzes the reversible transfer of the terminal phosphate group between ATP and AMP. Plays an important role in cellular energy homeostasis and in adenine nucleotide metabolism. In Thermosipho africanus (strain TCF52B), this protein is Adenylate kinase.